A 192-amino-acid chain; its full sequence is Ion-translocating oxidoreductase complex subunit B (192 aa).

The interval 1 to 26 is hydrophobic; the sequence is MNAIWIAVAAVSLLGLAFGAILGYAS. In terms of domain architecture, 4Fe-4S spans 32–91; it reads EDDPVVEKIDEILPQSQCGQCGYPGCRPYAEAISCNGEKINRCAPGGEAVMLKIAELLNV. Cysteine 49, cysteine 52, cysteine 57, cysteine 74, cysteine 117, cysteine 120, cysteine 123, cysteine 127, cysteine 147, cysteine 150, cysteine 153, and cysteine 157 together coordinate [4Fe-4S] cluster. 4Fe-4S ferredoxin-type domains lie at 108-137 and 138-167; these read MVAV…GATR and AMHT…LQPV.

This sequence belongs to the 4Fe4S bacterial-type ferredoxin family. RnfB subfamily. In terms of assembly, the complex is composed of six subunits: RsxA, RsxB, RsxC, RsxD, RsxE and RsxG. [4Fe-4S] cluster is required as a cofactor.

It is found in the cell inner membrane. Its function is as follows. Part of a membrane-bound complex that couples electron transfer with translocation of ions across the membrane. Required to maintain the reduced state of SoxR. The protein is Ion-translocating oxidoreductase complex subunit B of Escherichia coli O139:H28 (strain E24377A / ETEC).